The chain runs to 42 residues: MRDFKTYLSAAPVLSTLWLGALAGLLIEINRFFPDALTFPFF.

A helical membrane pass occupies residues 7-27 (YLSAAPVLSTLWLGALAGLLI).

This sequence belongs to the PsaJ family.

Its subcellular location is the plastid membrane. Functionally, may help in the organization of the PsaE and PsaF subunits. The chain is Photosystem I reaction center subunit IX from Cuscuta exaltata (Tall dodder).